The primary structure comprises 93 residues: YcgL domain-containing protein VV1_0131 (93 aa).

Residues 1–84 (MLCSIYKSSK…PPENLLQQHK (84 aa)) form the YcgL domain. Residues 72 to 93 (LPPPPENLLQQHKERKAQQKND) form a disordered region.

The sequence is that of YcgL domain-containing protein VV1_0131 from Vibrio vulnificus (strain CMCP6).